We begin with the raw amino-acid sequence, 218 residues long: Redox-sensing transcriptional repressor Rex (218 aa).

A DNA-binding region (H-T-H motif) is located at residues Trp-25–Val-64. Position 99 to 104 (Gly-99 to Gly-104) interacts with NAD(+).

This sequence belongs to the transcriptional regulatory Rex family. Homodimer.

It localises to the cytoplasm. Functionally, modulates transcription in response to changes in cellular NADH/NAD(+) redox state. This chain is Redox-sensing transcriptional repressor Rex, found in Porphyromonas gingivalis (strain ATCC BAA-308 / W83).